The chain runs to 437 residues: tRNA-2-methylthio-N(6)-dimethylallyladenosine synthase (437 aa).

The 116-residue stretch at 2 to 117 folds into the MTTase N-terminal domain; sequence KHLYIKTFGC…LPQMIQRALD (116 aa). 6 residues coordinate [4Fe-4S] cluster: C11, C48, C80, C154, C158, and C161. The Radical SAM core domain occupies 140–372; the sequence is RAQGVVGQVT…QQLLNTQQLQ (233 aa). Residues 375–437 form the TRAM domain; sequence KARVGRRESV…LPNSLRGRLV (63 aa).

It belongs to the methylthiotransferase family. MiaB subfamily. As to quaternary structure, monomer. Requires [4Fe-4S] cluster as cofactor.

The protein localises to the cytoplasm. It catalyses the reaction N(6)-dimethylallyladenosine(37) in tRNA + (sulfur carrier)-SH + AH2 + 2 S-adenosyl-L-methionine = 2-methylsulfanyl-N(6)-dimethylallyladenosine(37) in tRNA + (sulfur carrier)-H + 5'-deoxyadenosine + L-methionine + A + S-adenosyl-L-homocysteine + 2 H(+). Catalyzes the methylthiolation of N6-(dimethylallyl)adenosine (i(6)A), leading to the formation of 2-methylthio-N6-(dimethylallyl)adenosine (ms(2)i(6)A) at position 37 in tRNAs that read codons beginning with uridine. In Magnetococcus marinus (strain ATCC BAA-1437 / JCM 17883 / MC-1), this protein is tRNA-2-methylthio-N(6)-dimethylallyladenosine synthase.